The primary structure comprises 2291 residues: Protein Ycf2 B (2291 aa).

1642–1649 (GSIGTGRS) contacts ATP.

It belongs to the Ycf2 family.

It localises to the plastid. Its subcellular location is the chloroplast stroma. Its function is as follows. Probable ATPase of unknown function. Its presence in a non-photosynthetic plant (Epifagus virginiana) and experiments in tobacco indicate that it has an essential function which is probably not related to photosynthesis. This chain is Protein Ycf2 B (ycf2-B), found in Atropa belladonna (Belladonna).